The following is a 162-amino-acid chain: Circumsporozoite protein-related antigen (162 aa).

Positions 1-16 are cleaved as a signal peptide; sequence MKILSVFFLALFFIIF. Disordered regions lie at residues 24–44 and 109–162; these read KTNK…KGSG and PFKI…GPEH. Positions 114 to 130 are enriched in low complexity; that stretch reads SSDPADNANPDADSESN. The segment covering 137-162 has biased composition (polar residues); the sequence is PQVTAQDVTPEQPQGDDNNLVSGPEH.

The chain is Circumsporozoite protein-related antigen from Plasmodium falciparum.